Reading from the N-terminus, the 354-residue chain is Uroporphyrinogen decarboxylase (354 aa).

Substrate contacts are provided by residues Arg-27–Arg-31, Asp-77, Tyr-154, Thr-209, and His-327.

Belongs to the uroporphyrinogen decarboxylase family. As to quaternary structure, homodimer.

It is found in the cytoplasm. It catalyses the reaction uroporphyrinogen III + 4 H(+) = coproporphyrinogen III + 4 CO2. It participates in porphyrin-containing compound metabolism; protoporphyrin-IX biosynthesis; coproporphyrinogen-III from 5-aminolevulinate: step 4/4. In terms of biological role, catalyzes the decarboxylation of four acetate groups of uroporphyrinogen-III to yield coproporphyrinogen-III. The sequence is that of Uroporphyrinogen decarboxylase from Pectobacterium atrosepticum (strain SCRI 1043 / ATCC BAA-672) (Erwinia carotovora subsp. atroseptica).